The primary structure comprises 601 residues: Kelch-like ECH-associated protein 1A (601 aa).

The region spanning 44 to 117 (MDELRHHEML…VISRLIDFAY (74 aa)) is the BTB domain. Residues 153 to 253 (KNLEPSNVIG…LNAVHIYALP (101 aa)) form the BACK domain. 6 Kelch repeats span residues 292–337 (PTPH…PCSG), 338–388 (LGAC…PRNR), 389–435 (VGVG…ARLG), 436–482 (AGVA…VRSG), 484–529 (GVVC…CRSA), and 530–576 (HGVS…GRSG).

This sequence belongs to the KEAP1 family. In terms of assembly, homodimer and heterodimer; heterodimerizes with keap1b. Component of the BCR(KEAP1) E3 ubiquitin ligase complex, at least composed of 2 molecules of cul3, 2 molecules of keap1 (keap1a and/or keap1b), and rbx1. Interacts with nfe2l2/nrf2; the interaction is direct. Post-translationally, non-enzymatic covalent modifications of reactive cysteines by electrophile metabolites inactivate the BCR(KEAP1) complex. As to expression, widely expressed.

It localises to the cytoplasm. Its subcellular location is the nucleus. The protein operates within protein modification; protein ubiquitination. Ubiquitin ligase activity of the BCR(KEAP1) complex is inhibited by oxidative stress and electrophile metabolites such as sulforaphane. Electrophile metabolites react with reactive cysteine residues in keap1 and trigger non-enzymatic covalent modifications of these cysteine residues, leading to inactivate the ubiquitin ligase activity of the BCR(KEAP1) complex. In terms of biological role, substrate-specific adapter of a BCR (BTB-CUL3-RBX1) E3 ubiquitin ligase complex that regulates the response to oxidative stress by targeting nfe2l2/nrf2 for ubiquitination. Keap1 acts as a key sensor of oxidative and electrophilic stress: in normal conditions, the BCR(KEAP1) complex mediates ubiquitination and degradation of nfe2l2/nrf2, a transcription factor regulating expression of many cytoprotective genes. In response to oxidative stress, different electrophile metabolites trigger non-enzymatic covalent modifications of highly reactive cysteine residues in KEAP1, leading to inactivate the ubiquitin ligase activity of the BCR(KEAP1) complex, promoting nfe2l2/nrf2 nuclear accumulation and expression of phase II detoxifying enzymes. The protein is Kelch-like ECH-associated protein 1A of Danio rerio (Zebrafish).